We begin with the raw amino-acid sequence, 231 residues long: Orotidine 5'-phosphate decarboxylase (231 aa).

Residues Asp11, Lys32, 59 to 68 (DLKFHDIPNT), Thr118, Arg180, Gln189, Gly209, and Arg210 contribute to the substrate site. Lys61 functions as the Proton donor in the catalytic mechanism.

It belongs to the OMP decarboxylase family. Type 1 subfamily. Homodimer.

The enzyme catalyses orotidine 5'-phosphate + H(+) = UMP + CO2. The protein operates within pyrimidine metabolism; UMP biosynthesis via de novo pathway; UMP from orotate: step 2/2. Its function is as follows. Catalyzes the decarboxylation of orotidine 5'-monophosphate (OMP) to uridine 5'-monophosphate (UMP). This chain is Orotidine 5'-phosphate decarboxylase, found in Synechocystis sp. (strain ATCC 27184 / PCC 6803 / Kazusa).